The primary structure comprises 122 residues: Large ribosomal subunit protein uL14 (122 aa).

It belongs to the universal ribosomal protein uL14 family. As to quaternary structure, part of the 50S ribosomal subunit. Forms a cluster with proteins L3 and L19. In the 70S ribosome, L14 and L19 interact and together make contacts with the 16S rRNA in bridges B5 and B8.

In terms of biological role, binds to 23S rRNA. Forms part of two intersubunit bridges in the 70S ribosome. This Trichodesmium erythraeum (strain IMS101) protein is Large ribosomal subunit protein uL14.